The sequence spans 297 residues: Ribosomal protein L11 methyltransferase (297 aa).

S-adenosyl-L-methionine is bound by residues threonine 139, glycine 164, aspartate 186, and asparagine 233.

This sequence belongs to the methyltransferase superfamily. PrmA family.

It localises to the cytoplasm. The enzyme catalyses L-lysyl-[protein] + 3 S-adenosyl-L-methionine = N(6),N(6),N(6)-trimethyl-L-lysyl-[protein] + 3 S-adenosyl-L-homocysteine + 3 H(+). Its function is as follows. Methylates ribosomal protein L11. The polypeptide is Ribosomal protein L11 methyltransferase (Trichodesmium erythraeum (strain IMS101)).